We begin with the raw amino-acid sequence, 165 residues long: uncharacterized protein (165 aa).

6 helical membrane passes run Ile6–Ala26, Leu28–Tyr48, Ala54–Ala74, Trp78–Val98, Ala110–Leu130, and Ala138–Ile158.

It is found in the cell membrane. This is an uncharacterized protein from Bacillus subtilis (strain 168).